The following is a 466-amino-acid chain: Rhodanese-like domain-containing protein 4, chloroplastic (466 aa).

Residues 1–15 (MEALKTATFSPMSVL) constitute a chloroplast transit peptide. Residues 1–35 (MEALKTATFSPMSVLSEKRSEPRKPFSLPNLFPPK) are disordered. The N-terminal 54 residues, 16–69 (SEKRSEPRKPFSLPNLFPPKSQRPISQESFLKRFNGGLALLTSVLSSATAPAKS), are a transit peptide targeting the thylakoid. A helical transmembrane segment spans residues 103 to 123 (PLVIAGGVAALAVPFVLSQVL). One can recognise a Rhodanese domain in the interval 144 to 250 (TDDNAQLLDI…WLNSSLPWIE (107 aa)). A helical transmembrane segment spans residues 277 to 297 (VSVALGVAAAAGLSVFAFTEI). Positions 373 to 384 (EAESATATTTTV) are enriched in low complexity. Disordered stretches follow at residues 373–392 (EAES…PEPE) and 426–466 (AQVI…PSQP). Pro residues predominate over residues 455 to 466 (LKPPSSPMPSQP).

As to quaternary structure, component of high molecular weight thylakoid LFNRs-containing protein complexes containing LIR1, LFNR1, LFNR2, TIC62 and TROL proteins. In terms of tissue distribution, expressed in leaves and stems, and at lower levels in flowers and siliques (at protein level).

The protein resides in the plastid. It localises to the chloroplast envelope. Its subcellular location is the chloroplast thylakoid membrane. Rhodanese domain-containing protein required for anchoring ferredoxin--NADP reductase to the thylakoid membranes and sustaining efficient linear electron flow (LEF). The sequence is that of Rhodanese-like domain-containing protein 4, chloroplastic from Arabidopsis thaliana (Mouse-ear cress).